The sequence spans 118 residues: Elongin-B (118 aa).

Residue Met1 is modified to N-acetylmethionine. Positions 1–79 constitute a Ubiquitin-like domain; it reads MDVFLMIRRH…QAPATVGLAF (79 aa). Thr84 bears the Phosphothreonine mark. The disordered stretch occupies residues 91 to 118; it reads EPFSSPPELPDVMKPQDSGGSANEQAVQ. 2 positions are modified to phosphoserine: Ser108 and Ser111. Positions 108-118 are enriched in polar residues; it reads SGGSANEQAVQ.

The protein belongs to the Elongin B family. In terms of assembly, heterotrimer of an A (ELOA, ELOA2 or ELOA3P), ELOB and ELOC subunit. The elongin BC complex interacts with EPOP; leading to recruit the elongin BC complex to Polycomb group (PcG) target genes, thereby restricting excessive activity of the PRC2/EED-EZH2 complex. Component of multiple cullin-RING E3 ubiquitin-protein ligase complexes composed of Elongin BC (ELOB and ELOC), a cullin (either CUL2 or CUL5), a catalytic subunit (either RBX1 or RNF7/RBX2), as well as a substrate adapter protein that can be either ASB2, ASB9, ASB11, KLHDC2, KLHDC3, KLHDC10, APPBP2, FEM1A, FEM1B, FEM1C, LRR1, PCMTD1, SOCS1, SOCS2, SOCS5, SPSB1, SPSB3, ELOA, VHL, WSB1 or RAB40C. As part of the Elongin BC E3 ubiquitin ligase complex; interacts with NRBP1. May also interact with DCUN1D1, DCUN1D2, DCUN1D3 and DCUN1D5. May form oligomers as a KLHDC2/KLHDC3-ELOB-ELOC complex; this interaction is autoinhibitory for the E3 ligase complex as the substrate-binding site of KLHDC2/KLHDC3 is blocked in the oligomer.

It localises to the nucleus. It participates in protein modification; protein ubiquitination. SIII, also known as elongin, is a general transcription elongation factor that increases the RNA polymerase II transcription elongation past template-encoded arresting sites. Subunit A is transcriptionally active and its transcription activity is strongly enhanced by binding to the dimeric complex of the SIII regulatory subunits B and C (elongin BC complex). In embryonic stem cells, the elongin BC complex is recruited by EPOP to Polycomb group (PcG) target genes in order generate genomic region that display both active and repressive chromatin properties, an important feature of pluripotent stem cells. In terms of biological role, core component of multiple cullin-2 and cullin-5-RING E3 ubiquitin-protein ligase complexes (ECS complexes), which mediate the ubiquitination of target proteins. By binding to BC-box motifs it seems to link target recruitment subunits, like VHL and members of the SOCS box family, to Cullin/RBX1 modules that activate E2 ubiquitination enzymes. Component the von Hippel-Lindau ubiquitination complex CBC(VHL). A number of ECS complexes (containing either KLHDC2, KLHDC3, KLHDC10, APPBP2, FEM1A, FEM1B or FEM1C as substrate-recognition component) are part of the DesCEND (destruction via C-end degrons) pathway, which recognizes a C-degron located at the extreme C terminus of target proteins, leading to their ubiquitination and degradation. The ECS(ASB9) complex mediates ubiquitination and degradation of CKB. As part of a multisubunit ubiquitin ligase complex, polyubiquitinates monoubiquitinated POLR2A. ECS(LRR1) ubiquitinates MCM7 and promotes CMG replisome disassembly by VCP and chromatin extraction during S-phase. As part of the ECS(RAB40C) complex, mediates ANKRD28 ubiquitination and degradation, thereby inhibiting protein phosphatase 6 (PP6) complex activity and focal adhesion assembly during cell migration. This Mus musculus (Mouse) protein is Elongin-B.